A 332-amino-acid polypeptide reads, in one-letter code: MNIKIVVLVIFAILLGSALAWHGSKHHNPTKAPTEAPHRGGGGGGGHNTPAPTQPPRQNTPAPTFQALNVWFFFWLLLLARAPLTYVHITATSSEPIKLLVPLYVYPGAAWDSVANAAKTGVKIIAIINPNSGPASSGPDSSYTTYMNKLTAAGVDMVGYVHTSYGARAVGDVNADIDTYASKYPGLKGIFLDEASASASEISYYTNVYNHIKSKSGYVNSILNPGTQPDQGYLAISSNIVIFEDAGSNLKNNYASWVKCAPSASQKSGYKYKFSGIAHSTSSGSMSGIINTMVSVLAMGLVYVTDGAAGCCTYNTLTSYLSQEASAVHALN.

Positions 1–22 are cleaved as a signal peptide; sequence MNIKIVVLVIFAILLGSALAWH. A disordered region spans residues 26–60; the sequence is HHNPTKAPTEAPHRGGGGGGGHNTPAPTQPPRQNT.

The chain is Spherulin-4 from Physarum polycephalum (Slime mold).